The chain runs to 3901 residues: Nonribosomal peptide synthetase opaA (3901 aa).

An adenylation 1 region spans residues His248–Arg641. In terms of domain architecture, Carrier 1 spans Leu780–Lys854. Ser815 is subject to O-(pantetheine 4'-phosphoryl)serine. The condensation 1 stretch occupies residues Asp891 to Leu1164. Residues Gln1328–Arg1725 are adenylation 2. In terms of domain architecture, Carrier 2 spans Arg1858–Ala1936. The residue at position 1895 (Ser1895) is an O-(pantetheine 4'-phosphoryl)serine. The tract at residues Lys1953–Asn2261 is epimerase. The interval Glu2403–Leu2826 is condensation 2. Residues Gln2846–Arg3243 are adenylation 3. The Carrier 3 domain maps to Leu3375–Asp3451. Ser3412 carries the post-translational modification O-(pantetheine 4'-phosphoryl)serine. Positions His3509–Asn3837 are condensation 3.

The protein belongs to the NRP synthetase family.

Functionally, nonribosomal peptide synthetase; part of the gene cluster that mediates the biosynthesis of oxepinamides, derivatives of anthranilyl-containing tripeptides that share an oxepin ring and a fused pyrimidinone moiety. The nonribosomal peptide synthetase (NRPS) opaA assembles the quinazolinone core with D-Phe incorporation. The first adenylation domain (A1) of opaA loads and activates anthranilic acid whereas the second A domain (A2) is for activating of L-Phe, which is then converted to D-form by the E domain. The third A domain (A3) is responsible for L-Ile activation and the terminal condensation domain C3 for cyclization and releasing the NRPS product protuboxepin K. The cytochrome P450 monooxygenase opaB then catalyzes alone the oxepin ring formation to convert protuboxepin K into protuboxepin A. The flavoenzyme opaC installs subsequently one hydroxyl group at the oxepin ring, accompanied by double bond migration, to form 15-epi-oxepinamide E. The epimerase opaE changes the D-Phe residue back to L-form, leading to oxepinamide E, which is further methylated at the hydroxyl group at C-12 by the O-methyltransferase OpaF to yield oxepinamide F. This Aspergillus ustus protein is Nonribosomal peptide synthetase opaA.